The sequence spans 440 residues: Proline--tRNA ligase (440 aa).

This sequence belongs to the class-II aminoacyl-tRNA synthetase family. ProS type 2 subfamily. As to quaternary structure, homodimer.

The protein resides in the cytoplasm. The catalysed reaction is tRNA(Pro) + L-proline + ATP = L-prolyl-tRNA(Pro) + AMP + diphosphate. In terms of biological role, catalyzes the attachment of proline to tRNA(Pro) in a two-step reaction: proline is first activated by ATP to form Pro-AMP and then transferred to the acceptor end of tRNA(Pro). The polypeptide is Proline--tRNA ligase (Xanthobacter autotrophicus (strain ATCC BAA-1158 / Py2)).